Reading from the N-terminus, the 486-residue chain is MTNRIKSSNTLLTFDANEVTNIKLVWDIEELKNKDNKENKDKENKAHIKDEGEEEEQKEKKEEEEKEDDGGPISFHPTYSHQIFNEDKIQGYEPCKIDIYMGAGSLTSYIDTNYTLQSKNLTNVEGEFLKVFSKQDPPISKQSFYKYIEEKEKLFKPIGKKIHEYSIIDKESGKETEYEIYFGRITDQVVFRYHEKLQIFVLWYIDGSSYIWTDDPNWDIFFIFEKRIIDGEKRYGITGYSTIYNFYHHPEQTRARISQYLILPPYQRMGHGKYLFNSIYQYYKTNDGFYGPIYDITIEDPADEFNLLRNYVDLKNIMDEKLFDNVILDLNANNKSVFEEIRKKLLIPYKQSKLCLEIYLFSKFLGTPNSDTKYKEYRISIKKRLYKQNIGDSEQIEKIKQQVAEENQENLRLEQEELQELQDIENKKNGTNIKVDIKPKELTTPPGPEKNKEEIEKDRLEEILELYKELEKNYHKTLSSLNLISK.

A coiled-coil region spans residues 27 to 69 (DIEELKNKDNKENKDKENKAHIKDEGEEEEQKEKKEEEEKEDD). Basic and acidic residues predominate over residues 33 to 50 (NKDNKENKDKENKAHIKD). The interval 33–78 (NKDNKENKDKENKAHIKDEGEEEEQKEKKEEEEKEDDGGPISFHPT) is disordered. The N-acetyltransferase domain occupies 189–386 (VVFRYHEKLQ…YRISIKKRLY (198 aa)). Acetyl-CoA contacts are provided by residues 260–262 (YLI) and 267–273 (QRMGHGK). The Proton donor/acceptor role is filled by glutamate 299. Residues 392 to 481 (DSEQIEKIKQ…KNYHKTLSSL (90 aa)) are a coiled coil.

It belongs to the HAT1 family.

The enzyme catalyses L-lysyl-[protein] + acetyl-CoA = N(6)-acetyl-L-lysyl-[protein] + CoA + H(+). The protein is Histone acetyltransferase type B catalytic subunit DDB_G0274269 of Dictyostelium discoideum (Social amoeba).